The sequence spans 150 residues: Dual specificity protein phosphatase 23 (150 aa).

A Tyrosine-protein phosphatase domain is found at 7 to 150; sequence NFSWVLPGRL…AVFQFYQRTK (144 aa). The active-site Phosphocysteine intermediate is the Cys-95.

This sequence belongs to the protein-tyrosine phosphatase family. Non-receptor class dual specificity subfamily. Widely expressed. Highly expressed in spleen, prostate, colon, adrenal gland, mammary gland, thyroid and trachea. Expressed at lower level in uterus, small intestine, bladder, bone marrow, brain, spinal cord and stomach.

It is found in the cytoplasm. The protein localises to the cytosol. It localises to the nucleus. It carries out the reaction O-phospho-L-tyrosyl-[protein] + H2O = L-tyrosyl-[protein] + phosphate. It catalyses the reaction O-phospho-L-seryl-[protein] + H2O = L-seryl-[protein] + phosphate. The catalysed reaction is O-phospho-L-threonyl-[protein] + H2O = L-threonyl-[protein] + phosphate. Protein phosphatase that mediates dephosphorylation of proteins phosphorylated on Tyr and Ser/Thr residues. In vitro, it can dephosphorylate p44-ERK1 (MAPK3) but not p54 SAPK-beta (MAPK10) in vitro. Able to enhance activation of JNK and p38 (MAPK14). This Homo sapiens (Human) protein is Dual specificity protein phosphatase 23 (DUSP23).